A 147-amino-acid chain; its full sequence is Endoribonuclease YbeY (147 aa).

3 residues coordinate Zn(2+): His-111, His-115, and Asp-121.

It belongs to the endoribonuclease YbeY family. Zn(2+) serves as cofactor.

It localises to the cytoplasm. Its function is as follows. Single strand-specific metallo-endoribonuclease involved in late-stage 70S ribosome quality control and in maturation of the 3' terminus of the 16S rRNA. The polypeptide is Endoribonuclease YbeY (Amoebophilus asiaticus (strain 5a2)).